The primary structure comprises 128 residues: Ribosome-binding factor A (128 aa).

It belongs to the RbfA family. Monomer. Binds 30S ribosomal subunits, but not 50S ribosomal subunits or 70S ribosomes.

It is found in the cytoplasm. Functionally, one of several proteins that assist in the late maturation steps of the functional core of the 30S ribosomal subunit. Associates with free 30S ribosomal subunits (but not with 30S subunits that are part of 70S ribosomes or polysomes). Required for efficient processing of 16S rRNA. May interact with the 5'-terminal helix region of 16S rRNA. The polypeptide is Ribosome-binding factor A (Haemophilus influenzae (strain 86-028NP)).